Reading from the N-terminus, the 407-residue chain is uncharacterized protein (407 aa).

Disordered stretches follow at residues 73–93 (SPHS…VHGG) and 116–202 (SGSI…IKPS). 5 repeat units span residues 112-116 (GSIRS), 117-121 (GSIRS), 122-126 (GSIRN), 127-131 (GSIRS), and 132-136 (GSVRD). The interval 112–136 (GSIRSGSIRSGSIRNGSIRSGSVRD) is 5 X 5 AA tandem repeats of G-[S]-[IV]-R-[DNS]. The span at 116–132 (SGSIRSGSIRNGSIRSG) shows a compositional bias: low complexity. The segment covering 187–202 (NHYAESEYSEKSIKPS) has biased composition (basic and acidic residues).

This sequence belongs to the asfivirus B407L family.

This is an uncharacterized protein from Ornithodoros (relapsing fever ticks).